A 1050-amino-acid chain; its full sequence is FHIP family protein GE18198 (1050 aa).

Phosphoserine is present on residues Ser498 and Ser805. Disordered stretches follow at residues 800–827 (KGNE…GQLR), 865–888 (TSMF…SASS), 911–954 (TDGR…SGSN), and 968–995 (SNTT…SEPA). A compositionally biased stretch (polar residues) spans 808–826 (HHSQQQQMATNSGQQQGQL). Residues 872–888 (SASNTSTTPPNGSSASS) show a composition bias toward low complexity. Residues 918-935 (HAQTSAGTCETSLSTQPQ) are compositionally biased toward polar residues. Residues 941–954 (TGAIATSATASGSN) are compositionally biased toward low complexity. Positions 968-977 (SNTTTHSAST) are enriched in polar residues.

Belongs to the FHIP family.

This Drosophila yakuba (Fruit fly) protein is FHIP family protein GE18198.